A 655-amino-acid chain; its full sequence is MGIFSIANQHIRFAVKLACAIVLALFVGFHFQLETPRWAVLTAAIVAAGPAFAAGGEPYSGAIRYRGMLRIIGTFIGCIAALTIIITMIRAPLLMILVCCIWAGFCTWISSLVRVENSYAWGLSGYTALIIVITIQAEPLLTPQFAVERCSEIVIGIVCAIMADLLFSPRSVKQEVDREVDGLLVAQYQLMQLCIKHGDSEEVDKAWGDLVRRTAALEGMRSNLNMESSRWGRANRRLKALNTLSLTLITQSCETYLIQNTHPELITDTFRELFETPVETAQDVHKQLKRMRRIIAWTGERETPVTLYTWAGAATRYLLLKRGVIGNAKISVTEEEVLQGEPVVKVESAERHHAMVNFWRTTLSCVLGTLFWLWTGWTSGSGAMVMIAVVTSLAMRLPNPRMVAIDFIYGTLAALPLGLLYFLVIIPNTQQSMLLLCLSLAVLGFFLGIEVQKRRLGSMGALASTINIIVLDNPMTFHFSQFLDSALGQIVGCMMAFIVILLVRDNSRDRTGRVLLNQFVSAAVSAMTTNVVRRKENHLPALYQQLFLLMNKFPGDLPKFRLALTMIIAHQRLRDAPIPVNHDLSAFHRQLRRTADHVISAGNDDKRRRYFGQLLDELDVYQEKLRVWEAPPRVTEPVKRLSGMLHKYQHALTDN.

Helical transmembrane passes span 13-33 (FAVK…HFQL), 38-58 (WAVL…GGEP), 69-89 (LRII…ITMI), 93-113 (LLMI…SSLV), 121-141 (WGLS…EPLL), 152-172 (EIVI…PRSV), 370-390 (LFWL…IAVV), 407-427 (FIYG…VIIP), 431-451 (QSML…GIEV), 459-479 (MGAL…TFHF), and 482-502 (FLDS…VILL).

The protein belongs to the aromatic acid exporter ArAE (TC 2.A.85) family.

Its subcellular location is the cell inner membrane. Functionally, forms an efflux pump with AaeA. Could function as a metabolic relief valve, allowing to eliminate certain compounds when they accumulate to high levels in the cell. This chain is p-hydroxybenzoic acid efflux pump subunit AaeB, found in Citrobacter koseri (strain ATCC BAA-895 / CDC 4225-83 / SGSC4696).